A 378-amino-acid chain; its full sequence is tRNA-specific 2-thiouridylase MnmA (378 aa).

ATP contacts are provided by residues 9 to 16 (GVSGGVDS) and Met-35. The tract at residues 94–96 (NPD) is interaction with target base in tRNA. The active-site Nucleophile is Cys-99. Cys-99 and Cys-195 are joined by a disulfide. Residue Gly-123 coordinates ATP. Residues 145-147 (KDQ) form an interaction with tRNA region. The Cysteine persulfide intermediate role is filled by Cys-195. The interaction with tRNA stretch occupies residues 307 to 308 (RY).

Belongs to the MnmA/TRMU family.

The protein localises to the cytoplasm. It carries out the reaction S-sulfanyl-L-cysteinyl-[protein] + uridine(34) in tRNA + AH2 + ATP = 2-thiouridine(34) in tRNA + L-cysteinyl-[protein] + A + AMP + diphosphate + H(+). Functionally, catalyzes the 2-thiolation of uridine at the wobble position (U34) of tRNA, leading to the formation of s(2)U34. This chain is tRNA-specific 2-thiouridylase MnmA, found in Xanthomonas euvesicatoria pv. vesicatoria (strain 85-10) (Xanthomonas campestris pv. vesicatoria).